Reading from the N-terminus, the 245-residue chain is 5-oxoprolinase subunit A (245 aa).

Belongs to the LamB/PxpA family. Forms a complex composed of PxpA, PxpB and PxpC.

The enzyme catalyses 5-oxo-L-proline + ATP + 2 H2O = L-glutamate + ADP + phosphate + H(+). Catalyzes the cleavage of 5-oxoproline to form L-glutamate coupled to the hydrolysis of ATP to ADP and inorganic phosphate. The chain is 5-oxoprolinase subunit A from Yersinia pseudotuberculosis serotype O:1b (strain IP 31758).